A 316-amino-acid chain; its full sequence is Tetrahydromethanopterin S-methyltransferase subunit H (316 aa).

The protein belongs to the MtrH family. In terms of assembly, the complex is composed of 8 subunits; MtrA, MtrB, MtrC, MtrD, MtrE, MtrF, MtrG and MtrH.

The enzyme catalyses 5-methyl-5,6,7,8-tetrahydromethanopterin + coenzyme M + 2 Na(+)(in) = 5,6,7,8-tetrahydromethanopterin + methyl-coenzyme M + 2 Na(+)(out). Its pathway is one-carbon metabolism; methanogenesis from CO(2); methyl-coenzyme M from 5,10-methylene-5,6,7,8-tetrahydromethanopterin: step 2/2. Functionally, part of a complex that catalyzes the formation of methyl-coenzyme M and tetrahydromethanopterin from coenzyme M and methyl-tetrahydromethanopterin. This is an energy-conserving, sodium-ion translocating step. MtrH catalyzes the transfer of the methyl group from methyl-tetrahydromethanopterin to the corrinoid prosthetic group of MtrA. In Methanosarcina barkeri (strain Fusaro / DSM 804), this protein is Tetrahydromethanopterin S-methyltransferase subunit H.